Reading from the N-terminus, the 250-residue chain is Ubiquinone/menaquinone biosynthesis C-methyltransferase UbiE (250 aa).

S-adenosyl-L-methionine contacts are provided by residues T73, D94, 122–123 (NA), and S139.

Belongs to the class I-like SAM-binding methyltransferase superfamily. MenG/UbiE family.

The enzyme catalyses a 2-demethylmenaquinol + S-adenosyl-L-methionine = a menaquinol + S-adenosyl-L-homocysteine + H(+). It catalyses the reaction a 2-methoxy-6-(all-trans-polyprenyl)benzene-1,4-diol + S-adenosyl-L-methionine = a 5-methoxy-2-methyl-3-(all-trans-polyprenyl)benzene-1,4-diol + S-adenosyl-L-homocysteine + H(+). The protein operates within quinol/quinone metabolism; menaquinone biosynthesis; menaquinol from 1,4-dihydroxy-2-naphthoate: step 2/2. It participates in cofactor biosynthesis; ubiquinone biosynthesis. Methyltransferase required for the conversion of demethylmenaquinol (DMKH2) to menaquinol (MKH2) and the conversion of 2-polyprenyl-6-methoxy-1,4-benzoquinol (DDMQH2) to 2-polyprenyl-3-methyl-6-methoxy-1,4-benzoquinol (DMQH2). The sequence is that of Ubiquinone/menaquinone biosynthesis C-methyltransferase UbiE from Francisella tularensis subsp. novicida (strain U112).